The sequence spans 702 residues: Polyribonucleotide nucleotidyltransferase (702 aa).

Mg(2+) contacts are provided by Asp-487 and Asp-493. One can recognise a KH domain in the interval 554–613 (PKILTMQINPDKIRDVIGPSGKQINKIIEETGVKIDIEQDGTIFISSVNEEMNKKAKKII). The S1 motif domain occupies 623 to 691 (GQVYLGKVKR…KQGRVNLSRK (69 aa)).

It belongs to the polyribonucleotide nucleotidyltransferase family. Mg(2+) serves as cofactor.

Its subcellular location is the cytoplasm. It carries out the reaction RNA(n+1) + phosphate = RNA(n) + a ribonucleoside 5'-diphosphate. Involved in mRNA degradation. Catalyzes the phosphorolysis of single-stranded polyribonucleotides processively in the 3'- to 5'-direction. The sequence is that of Polyribonucleotide nucleotidyltransferase from Anoxybacillus flavithermus (strain DSM 21510 / WK1).